An 856-amino-acid polypeptide reads, in one-letter code: MNVIDTDDLEKHTPMMRQYLTMKAEHHDMLLFYRMGDFYELFYDDAKRASELLGISLTARGKSGGDPIPMAGLPYHAVEGYLAKLVQIGQSVAICEQIGDPATSKGPVERKVVRIVTPGTLTDEALLQERQDNLLAAVYQGKIGFGYATLDVSSGRFVIAELDTRESLEAELQRTNPVEILYSEDFGELGLLNGFKGKRRRPEWEFDYDTSIKLLLAQFGTKDLHGFGIADARLSLQAAGCLMQYVKDTQRTALPHINAITRFNQTDSIVLDAATRRNLELTQNLAGGRDNTLAAVLDNTATPMGSRILQRWIHQPLRDPKHIQARQQAVTELLDTAAHEGLHEQLKALGDIERIMARLALRTARPRDFARLRQALGLLPELQKSLSTLSAPHTTQLRQHLGEFPAEQALLERAIVDNPPMLIRDGGVIREGYNSELDEWRGLSEGASDYLVQLEAREKERTGINTLKVGYNRVHGYYIEVSRLQSSQVPLNYQRRQTLKNMERYITPELKEYEEKVLSSQGKALALEKQLWEQLFDLILPKLHELQAFARAAAELDVLSNFAERAETLGYTCPELSQDIGVQIEAGRHPVVERVSQTPFIANPVTLHNQRRMLIVTGPNMGGKSTYMRQVALITLMAHIGCFVPAGRALIGPIDRIFTRIGASDDLASGRSTFMVEMTETANILHNATASSLVLMDEIGRGTSTYDGLSLAWSAAEYLAQQVGAMTLFATHYFELTQLPELMAGVYNVHLDAIEHDDTIAFMHTVQEGAASKSYGLQVAALAGVPNKVIKAAKHKLQQLESRDHQAEGTRTPIQSLLALPEPVENPALTKLSSINPDNLTPKQALDLLYELKRLS.

618 to 625 (GPNMGGKS) lines the ATP pocket.

It belongs to the DNA mismatch repair MutS family.

Functionally, this protein is involved in the repair of mismatches in DNA. It is possible that it carries out the mismatch recognition step. This protein has a weak ATPase activity. In Shewanella baltica (strain OS155 / ATCC BAA-1091), this protein is DNA mismatch repair protein MutS.